The chain runs to 229 residues: Transmembrane emp24 domain-containing protein 5 (229 aa).

A signal peptide spans 1-27 (MGGRMWLPFPVLLLSALPAALLRGAAG). The Lumenal portion of the chain corresponds to 28-196 (FTPSLDSDFT…IQESNFDRVN (169 aa)). In terms of domain architecture, GOLD spans 45-126 (KECFYQPMPL…EKVIFFELIL (82 aa)). A helical transmembrane segment spans residues 197–217 (FWSVVNLMVMVVVSAIQVYTL). Residues 218 to 229 (KSLFEDKRKSRT) lie on the Cytoplasmic side of the membrane.

This sequence belongs to the EMP24/GP25L family. Interacts with TMED9 and TMED10.

Its subcellular location is the endoplasmic reticulum membrane. The protein localises to the golgi apparatus. The protein resides in the cis-Golgi network membrane. It is found in the endoplasmic reticulum-Golgi intermediate compartment membrane. Functionally, potential role in vesicular protein trafficking, mainly in the early secretory pathway. Required for the maintenance of the Golgi apparatus; involved in protein exchange between Golgi stacks during assembly. Probably not required for COPI-vesicle-mediated retrograde transport. The polypeptide is Transmembrane emp24 domain-containing protein 5 (Tmed5) (Mus musculus (Mouse)).